We begin with the raw amino-acid sequence, 444 residues long: MRRFFGTDGIRGLTNKVPMTAEVAMRVGMAAGAHFLRGDHKHRVVIGKDTRLSGYMLENALVAGFTSVGMDVVQVGPMPTPAIAMLTRSMRADLGVMISASHNPYQDNGIKLFGPDGYKLSDADEAAIERLLVEEPRLADATHIGRAKRIDDARGRYIHAVKQSLPQMVRLDGLRIVLDCANGAAYNSAPTVFWELGADVVAIGVEPNGTNINDKCGSTAPALLQETVVASGADIGIALDGDADRLIVVDEKGSIIDGDQIMGLIGASWARQGRLKGGGVVATVMSNLGLERFLEGQGLRLERTKVGDRHVLERMKEGGFNVGGEQSGHMILSDHATTGDGTLAALQLLAELVAAERPASELLHQFDPVPQLLKNVRFAGGKPLEDKQVLAAIAEGEAALNGRGRLVIRPSGTEPLIRVMAEGDDAGEVERVVDMICDAVRAAV.

The Phosphoserine intermediate role is filled by S101. Residues S101, D240, D242, and D244 each coordinate Mg(2+). Residue S101 is modified to Phosphoserine.

This sequence belongs to the phosphohexose mutase family. The cofactor is Mg(2+). Post-translationally, activated by phosphorylation.

It carries out the reaction alpha-D-glucosamine 1-phosphate = D-glucosamine 6-phosphate. In terms of biological role, catalyzes the conversion of glucosamine-6-phosphate to glucosamine-1-phosphate. In Sphingopyxis alaskensis (strain DSM 13593 / LMG 18877 / RB2256) (Sphingomonas alaskensis), this protein is Phosphoglucosamine mutase.